Consider the following 115-residue polypeptide: Divalent-cation tolerance protein CutA (115 aa).

Cu cation is bound by residues Cys-19, His-86, and His-87.

It belongs to the CutA family. In terms of assembly, homotrimer. It depends on Cu cation as a cofactor.

The protein resides in the cytoplasm. In terms of biological role, involved in resistance toward heavy metals. This is Divalent-cation tolerance protein CutA from Salmonella agona (strain SL483).